The sequence spans 54 residues: Potassium channel toxin alpha-KTx 14.1 (54 aa).

The N-terminal stretch at 1–23 is a signal peptide; that stretch reads MKIFFAILLILAVCSMAIWTVNG.

It belongs to the short scorpion toxin superfamily. Potassium channel inhibitor family. Alpha-KTx 14 subfamily. Probably has three disulfide bridges. As to expression, expressed by the venom gland.

The protein localises to the secreted. Potential blocker of potassium channels. This chain is Potassium channel toxin alpha-KTx 14.1, found in Olivierus martensii (Manchurian scorpion).